We begin with the raw amino-acid sequence, 591 residues long: ATPase family AAA domain-containing protein 3A (591 aa).

A disordered region spans residues 1 to 52 (MSWLFGIKGPKGEGTGPPLPLPPAQPGAESGGDRGAGDRPSPKDKWSNFDPT). An N-acetylserine modification is found at Ser-2. The tract at residues 2 to 49 (SWLFGIKGPKGEGTGPPLPLPPAQPGAESGGDRGAGDRPSPKDKWSNF) is required for interaction with the inner surface of the mitochondrial outer membrane. Over 2–245 (SWLFGIKGPK…FRAFVTDWDK (244 aa)) the chain is Mitochondrial intermembrane. Basic and acidic residues predominate over residues 31 to 47 (GGDRGAGDRPSPKDKWS). Positions 55–216 (ERAAKAAREL…REQIRLKAAE (162 aa)) form a coiled coil. The helical transmembrane segment at 246–263 (VTATVAGLTLLAVGVYSA) threads the bilayer. Residues 264-591 (KNATSVAGRY…KPPHPSLLSC (328 aa)) are Mitochondrial matrix-facing. Residues 289-304 (RISVLEALRHPIQVSR) form an S100B-binding region. 351-358 (GPPGTGKT) is a binding site for ATP. Lys-490 is subject to N6-acetyllysine; alternate. Lys-490 carries the N6-succinyllysine; alternate modification. 2 positions are modified to N6-acetyllysine: Lys-494 and Lys-512.

The protein belongs to the AAA ATPase family. As to quaternary structure, can form homooligomers. Homodimer formation at the N-terminus may be regulated by ATP and is required for the interaction with the inner surface of the mitochondrial outer membrane and correct mitochondrial homeostasis. Interacts with components of the mitochondrial ribosome and with other proteins involved in mitochondrial RNA metabolism. May also interact with protein involved in lipid metabolism, including STARD9. May interact with FAM210A. Interacts with GADD45GIP1. Interacts with S100B in a Ca(+2)- and Zn(+2)-dependent manner; this interaction probably occurs in the cytosol prior to mitochondrial targeting. S100B could assist ATAD3A cytoplasmic processing, preventing aggregation and favoring mitochondrial localization. Interacts with HSP60/HSPD1. Interacts with CLPB. Interacts with EIF2AK3/PERK; ATAD3A and EIF2S1/eIF-2-alpha occupy a common binding site within the cytoplasmic loop of EIF2AK3/PERK, leading to prevent EIF2AK3/PERK association with its substrate EIF2S1/eIF-2-alpha.

It localises to the mitochondrion inner membrane. The protein resides in the mitochondrion matrix. It is found in the mitochondrion nucleoid. It catalyses the reaction ATP + H2O = ADP + phosphate + H(+). Functionally, essential for mitochondrial network organization, mitochondrial metabolism and cell growth at organism and cellular level. May play an important role in mitochondrial protein synthesis. May also participate in mitochondrial DNA replication. May bind to mitochondrial DNA D-loops and contribute to nucleoid stability. Required for enhanced channeling of cholesterol for hormone-dependent steroidogenesis. Involved in mitochondrial-mediated antiviral innate immunity. Required to protect mitochondria from the PERK-mediated unfolded protein response: specifically inhibits the activity of EIF2AK3/PERK at mitochondria-endoplasmic reticulum contact sites, thereby providing a safe haven for mitochondrial protein translation during endoplasmic reticulum stress. Ability to inhibit EIF2AK3/PERK is independent of its ATPase activity. Also involved in the mitochondrial DNA damage response by promoting signaling between damaged genomes and the mitochondrial membrane, leading to activation of the integrated stress response (ISR). In Rattus norvegicus (Rat), this protein is ATPase family AAA domain-containing protein 3A (Atad3a).